The chain runs to 853 residues: DNA mismatch repair protein MutS (853 aa).

An ATP-binding site is contributed by 614-621 (GPNMGGKS).

This sequence belongs to the DNA mismatch repair MutS family.

Functionally, this protein is involved in the repair of mismatches in DNA. It is possible that it carries out the mismatch recognition step. This protein has a weak ATPase activity. In Escherichia coli O6:K15:H31 (strain 536 / UPEC), this protein is DNA mismatch repair protein MutS.